The following is a 59-amino-acid chain: MSLVKVRIGDSIDKALRALKKRLDKEGVMKSVKAHRFYSKPSIKKRAKSKAALKYKKQR.

Positions 40 to 59 (KPSIKKRAKSKAALKYKKQR) are disordered.

It belongs to the bacterial ribosomal protein bS21 family.

The sequence is that of Small ribosomal subunit protein bS21 from Protochlamydia amoebophila (strain UWE25).